A 30-amino-acid polypeptide reads, in one-letter code: Cyclotide mden-E (30 aa).

The segment at residues 1 to 30 (GIPCGESCVYIPCITAAIGCSCKSKVCYRN) is a cross-link (cyclopeptide (Gly-Asn)). Disulfide bonds link Cys-4–Cys-20, Cys-8–Cys-22, and Cys-13–Cys-27.

The protein belongs to the cyclotide family. Bracelet subfamily. In terms of processing, this is a cyclic peptide.

Probably participates in a plant defense mechanism. The protein is Cyclotide mden-E of Melicytus dentatus (Tree violet).